The sequence spans 337 residues: Holliday junction branch migration complex subunit RuvB (337 aa).

The large ATPase domain (RuvB-L) stretch occupies residues 4-186; sequence ADRLIAADNP…FGIVQRLEYY (183 aa). Residues Ile25, Arg26, Gly67, Lys70, Thr71, Thr72, 133–135, Arg176, Tyr186, and Arg223 contribute to the ATP site; that span reads EDY. Thr71 contacts Mg(2+). The interval 187-257 is small ATPAse domain (RuvB-S); that stretch reads KVEDLQHIVQ…IADKALNMLD (71 aa). The tract at residues 260–337 is head domain (RuvB-H); sequence VRGFDYMDRK…LHFGIDKPDK (78 aa). DNA contacts are provided by Arg296, Arg315, and Arg320.

This sequence belongs to the RuvB family. As to quaternary structure, homohexamer. Forms an RuvA(8)-RuvB(12)-Holliday junction (HJ) complex. HJ DNA is sandwiched between 2 RuvA tetramers; dsDNA enters through RuvA and exits via RuvB. An RuvB hexamer assembles on each DNA strand where it exits the tetramer. Each RuvB hexamer is contacted by two RuvA subunits (via domain III) on 2 adjacent RuvB subunits; this complex drives branch migration. In the full resolvosome a probable DNA-RuvA(4)-RuvB(12)-RuvC(2) complex forms which resolves the HJ.

It is found in the cytoplasm. The enzyme catalyses ATP + H2O = ADP + phosphate + H(+). Its function is as follows. The RuvA-RuvB-RuvC complex processes Holliday junction (HJ) DNA during genetic recombination and DNA repair, while the RuvA-RuvB complex plays an important role in the rescue of blocked DNA replication forks via replication fork reversal (RFR). RuvA specifically binds to HJ cruciform DNA, conferring on it an open structure. The RuvB hexamer acts as an ATP-dependent pump, pulling dsDNA into and through the RuvAB complex. RuvB forms 2 homohexamers on either side of HJ DNA bound by 1 or 2 RuvA tetramers; 4 subunits per hexamer contact DNA at a time. Coordinated motions by a converter formed by DNA-disengaged RuvB subunits stimulates ATP hydrolysis and nucleotide exchange. Immobilization of the converter enables RuvB to convert the ATP-contained energy into a lever motion, pulling 2 nucleotides of DNA out of the RuvA tetramer per ATP hydrolyzed, thus driving DNA branch migration. The RuvB motors rotate together with the DNA substrate, which together with the progressing nucleotide cycle form the mechanistic basis for DNA recombination by continuous HJ branch migration. Branch migration allows RuvC to scan DNA until it finds its consensus sequence, where it cleaves and resolves cruciform DNA. This is Holliday junction branch migration complex subunit RuvB from Aliivibrio fischeri (strain ATCC 700601 / ES114) (Vibrio fischeri).